Reading from the N-terminus, the 328-residue chain is D-cysteine desulfhydrase (328 aa).

Lys51 is subject to N6-(pyridoxal phosphate)lysine.

This sequence belongs to the ACC deaminase/D-cysteine desulfhydrase family. As to quaternary structure, homodimer. Pyridoxal 5'-phosphate is required as a cofactor.

The catalysed reaction is D-cysteine + H2O = hydrogen sulfide + pyruvate + NH4(+) + H(+). Functionally, catalyzes the alpha,beta-elimination reaction of D-cysteine and of several D-cysteine derivatives. It could be a defense mechanism against D-cysteine. The chain is D-cysteine desulfhydrase from Salmonella choleraesuis (strain SC-B67).